The chain runs to 975 residues: 5'-3' exoribonuclease 2 homolog (975 aa).

A CCHC-type zinc finger spans residues 262–279 (RACDLCGQYGHELKECRG). 2 disordered regions span residues 424-443 (MQMYGGGGRGGRGRGRGRGQ) and 505-532 (SPADIASRKRKAEQPLIKPEEEEDEGPK). Positions 534-787 (DIRLYESGWK…GICVLYEDPE (254 aa)) are interaction with paxt-1. The span at 804 to 821 (EPEKTLKPDDWNDRRDGR) shows a compositional bias: basic and acidic residues. A disordered region spans residues 804 to 975 (EPEKTLKPDD…GGYHGNSSWR (172 aa)). Composition is skewed to gly residues over residues 850–860 (RGGGGGGGGYR), 886–895 (NYGGRDGGGP), and 908–932 (GYQGGGYGGGYGGGGGGGGGGGGGS).

This sequence belongs to the 5'-3' exonuclease family. XRN2/RAT1 subfamily. Interacts with paxt-1 (via N-terminus); the interaction is direct and results in stabilization of xrn-2 in the complex. As to expression, expressed in the pharyngeal myoepithelium and intestine. Also expressed in several anterior neurons including the sensory neurons, as well as the interneuron PVT and the pharyngeal motorneuron M5.

It is found in the nucleus. In terms of biological role, possesses 5'-&gt;3' exoribonuclease activity. Plays a role in maintenance of steady-state concentration and turnover of microRNAs (miRNA) by degradation of mature miRNA. Degradation role is enhanced when in complex with paxt-1. Partially redundant to xrn-1 in miRNA guide strand degradation. Implicated in differential regulation of mRNAs such as let-7 by controlling the accumulation of mature miRNA. Positively regulates molting of the pharyngeal cuticle. The chain is 5'-3' exoribonuclease 2 homolog from Caenorhabditis elegans.